Consider the following 463-residue polypeptide: MTHKPCLLYSQLPAIDRLLREPQITPLVEQYGQTLVTATLRRMQEQARINIKQYQALPDWCDNWASALGQQLEQKQALALKPVFNLSGTVIHTNLGRALMAESAIEAVTQVMRSPVTLEYSLNNAERGHRDHALADLLCELTGAEDACIVNNNAAAVLLLLATVASGKQVVVSRGELVEIGGAFRIPDVMVQAGCRLVEVGTTNRTHLKDYRQAINEETALLMKVHTSNYNIDGFTAEVSGRELATLGIASQIPTAIDLGSGSMINMVQYGLPAEPMPQDYLNQGIDLVTFSGDKLLGGPQAGIILGKKHWIEAIQRHPLKRALRADKMTLAALEATLRLYQRPEQLCQQLPTLRLLTRSQQQMHDMAQRLLPQLQAHYGDQFIVRDEPCYSQIGSGSLPVDRLPSWALTFAAVEGQGSSLERLARCWRGLAKPVLGRISGGRLWLDLRCLEDEKALLQALLL.

Residue Lys295 is modified to N6-(pyridoxal phosphate)lysine.

The protein belongs to the SelA family. Homodecamer; pentamer of dimers. Binds only one seryl-tRNA(Sec) per dimer. The cofactor is pyridoxal 5'-phosphate.

It localises to the cytoplasm. The catalysed reaction is L-seryl-tRNA(Sec) + selenophosphate + H(+) = L-selenocysteinyl-tRNA(Sec) + phosphate. The protein operates within aminoacyl-tRNA biosynthesis; selenocysteinyl-tRNA(Sec) biosynthesis; selenocysteinyl-tRNA(Sec) from L-seryl-tRNA(Sec) (bacterial route): step 1/1. Converts seryl-tRNA(Sec) to selenocysteinyl-tRNA(Sec) required for selenoprotein biosynthesis. The polypeptide is L-seryl-tRNA(Sec) selenium transferase (Photorhabdus laumondii subsp. laumondii (strain DSM 15139 / CIP 105565 / TT01) (Photorhabdus luminescens subsp. laumondii)).